Reading from the N-terminus, the 356-residue chain is Phosphate acyltransferase (356 aa).

It belongs to the PlsX family. In terms of assembly, homodimer. Probably interacts with PlsY.

The protein localises to the cytoplasm. It carries out the reaction a fatty acyl-[ACP] + phosphate = an acyl phosphate + holo-[ACP]. It functions in the pathway lipid metabolism; phospholipid metabolism. Catalyzes the reversible formation of acyl-phosphate (acyl-PO(4)) from acyl-[acyl-carrier-protein] (acyl-ACP). This enzyme utilizes acyl-ACP as fatty acyl donor, but not acyl-CoA. This chain is Phosphate acyltransferase, found in Escherichia coli (strain 55989 / EAEC).